Reading from the N-terminus, the 688-residue chain is Polymerase acidic protein (688 aa).

Disordered regions lie at residues 54–82 (NTEP…TEEG) and 110–129 (EAQA…GGEG). Over residues 56-65 (EPRERSHTQA) the composition is skewed to basic and acidic residues. The span at 119-129 (GPNEADSGGEG) shows a compositional bias: acidic residues.

In terms of assembly, RNA polymerase is composed of three subunits: PA, PB1 and PB2.

It localises to the virion. The protein resides in the host nucleus. Functionally, subunit of the RNA-dependent RNA polymerase which is responsible for replication and transcription of virus RNA segments. The transcription of viral mRNAs occurs by a unique mechanism called cap-snatching. 5' methylated caps of cellular mRNAs are cleaved after 10-13 nucleotides by PA. In turn, these short capped RNAs are used as primers by PB1 for transcription of viral mRNAs. During virus replication, PB1 initiates RNA synthesis and copy vRNA into complementary RNA (cRNA) which in turn serves as a template for the production of more vRNAs. This Ixodidae (hardbacked ticks) protein is Polymerase acidic protein (PA).